A 317-amino-acid polypeptide reads, in one-letter code: uncharacterized protein (317 aa).

7 helical membrane passes run 18–38 (FWLI…LVII), 58–78 (IILS…GFIF), 92–112 (FLGS…WWSF), 130–150 (LFSA…AWAV), 159–179 (LFHI…KLLP), 202–222 (CSFL…LSTV), and 252–272 (NLLN…LLIA).

It belongs to the CbiQ family.

Its subcellular location is the cell membrane. This is an uncharacterized protein from Mycoplasma genitalium (strain ATCC 33530 / DSM 19775 / NCTC 10195 / G37) (Mycoplasmoides genitalium).